Reading from the N-terminus, the 3855-residue chain is Replicase polyprotein 1ab (3855 aa).

The segment at 8–28 (CMCTPAARVFWNAGQVFCTRC) adopts a C4-type; atypical zinc-finger fold. The 112-residue stretch at 69–180 (ECTPSGCCWL…QPFCPFEEAH (112 aa)) folds into the Peptidase C31 domain. The tract at residues 69 to 182 (ECTPSGCCWL…FCPFEEAHSS (114 aa)) is PCP1-alpha. Catalysis depends on for nsp1-alpha papain-like cysteine proteinase activity residues Cys-76 and His-146. The tract at residues 203 to 204 (MM) is important for host EIF2AK2 inhibition. The tract at residues 269-384 (PDVFDGKCWL…IFRFGAHKWY (116 aa)) is PCP1-beta. The 117-residue stretch at 269 to 385 (PDVFDGKCWL…FRFGAHKWYG (117 aa)) folds into the Peptidase C32 domain. Residues Cys-276 and His-345 each act as for nsp1-beta papain-like cysteine proteinase activity in the active site. Residues 418–505 (ITTYSPPTDG…GVHWEVEVRS (88 aa)) are OTU-like. The Peptidase C33 domain maps to 420–527 (TYSPPTDGSC…VGVCSEGCVA (108 aa)). Active-site for nsp2 cysteine proteinase activity residues include Cys-429 and His-498. Disordered regions lie at residues 752-797 (PSDP…DAGA) and 1047-1088 (PPPK…SRVS). Over residues 775–790 (APASTTTLVREQTPDN) the composition is skewed to polar residues. A run of 3 helical transmembrane segments spans residues 1134–1154 (GSMA…LLLC), 1179–1199 (GVFG…SNPV), and 1252–1272 (WHVL…VYVV). The tract at residues 1149-1272 (LALLLCRSYP…DLALSLVYVV (124 aa)) is HD1. Residues 1327–1351 (TGWRGCWRGESPIHQPHQKPIAYAN) form a WCCH region. Helical transmembrane passes span 1468–1488 (LAVA…LWFT), 1521–1541 (LCVS…QLSG), 1543–1563 (EVGI…RMAL), 1573–1593 (AFCA…PILL), and 1609–1629 (FLVF…GLLW). Residues 1468–1629 (LAVAQVSAWT…LSLGITGLLW (162 aa)) are HD2. In terms of domain architecture, Peptidase S32 spans 1694-1896 (GAFRTHKPCL…SLLASVPVVE (203 aa)). Catalysis depends on charge relay system; for serine protease nsp4 activity residues His-1732, Asp-1757, and Ser-1810. The next 4 membrane-spanning stretches (helical) occupy residues 1919 to 1939 (WTPI…AVLV), 1943 to 1963 (FSFA…VLMI), 1977 to 1997 (LAFY…TFAG), and 2020 to 2040 (SCVP…LWLF). Residues 1919–2040 (WTPIVAVGFF…HTLGVILWLF (122 aa)) form an HD3 region. One can recognise a NiRAN domain in the interval 2381-2544 (IISQLQGLTT…LPYKLYPVRG (164 aa)). The region spanning 2783-2917 (GRCLEADLAS…YAERPTFPNY (135 aa)) is the RdRp catalytic domain. Residues 3038 to 3101 (GKKFRHCGIC…SPVGAGRSPL (64 aa)) enclose the AV ZBD domain. Zn(2+) contacts are provided by Cys-3044, Cys-3047, Cys-3057, Cys-3062, His-3065, His-3067, His-3069, His-3071, Cys-3078, His-3080, Cys-3087, and Cys-3090. One can recognise a (+)RNA virus helicase ATP-binding domain in the interval 3151-3310 (DLSDGDYQVV…VFDQMPQKQL (160 aa)). 3186–3193 (GPPGSGKT) is an ATP binding site. Positions 3311–3440 (TTIYRFGPNI…FSRGDELVVL (130 aa)) constitute a (+)RNA virus helicase C-terminal domain. In terms of domain architecture, AV-Nsp11N/CoV-Nsp15M spans 3479–3576 (EGSCMPLPQV…LTLYIRGEPQ (98 aa)). One can recognise a NendoU domain in the interval 3578 to 3700 (LPETLVSTGR…MVWKGATAYF (123 aa)). Active-site residues include His-3609, His-3624, and Lys-3653.

It belongs to the arteriviridae polyprotein family. Nsp1-alpha papain-like: Interacts with host RNF31. In terms of assembly, interacts with host EIF2AK2; this interaction occurs in host stress granules and leads to EIF2AK2 inhibition. Interacts with host G3BP1; this interaction probably plays a role in Nsp1-beta-mediated inhibition of host EIF2AK2. As to quaternary structure, interacts with host DDX18; this interaction redistributes host DDX18 to the cytoplasm. Interacts with host IFITM1. In terms of assembly, interacts with host DDX5. As to quaternary structure, interacts with host OTULIN. Interacts with host LGALS3. In terms of processing, specific enzymatic cleavages in vivo by its own proteases yield mature proteins. Nsp1 is autocleaved into two subunits, Nsp1-alpha and Nsp1-beta. There are two alternative pathways for processing. Either nsp4-5 is cleaved, which represents the major pathway or the nsp5-6 and nsp6-7 are processed, which represents the minor pathway. The major pathway occurs when nsp2 acts as a cofactor for nsp4.

It is found in the host nucleus. Its subcellular location is the host cytoplasm. The protein resides in the host membrane. It localises to the host endoplasmic reticulum. The protein localises to the host perinuclear region. It catalyses the reaction RNA(n) + a ribonucleoside 5'-triphosphate = RNA(n+1) + diphosphate. The catalysed reaction is ATP + H2O = ADP + phosphate + H(+). The enzyme catalyses Thiol-dependent hydrolysis of ester, thioester, amide, peptide and isopeptide bonds formed by the C-terminal Gly of ubiquitin (a 76-residue protein attached to proteins as an intracellular targeting signal).. It carries out the reaction uridylyl-uridylyl-ribonucleotide-RNA = a 3'-end uridylyl-2',3'-cyclophospho-uridine-RNA + a 5'-end dephospho-ribonucleoside-RNA. In terms of biological role, contains the activities necessary for the transcription of negative stranded RNA, leader RNA, subgenomic mRNAs and progeny virion RNA as well as proteinases responsible for the cleavage of the polyprotein into functional products. Its function is as follows. Inhibits host IFN-beta production. Plays a role in the degradation of the host transcriptional activator CREBBP protein. The degradation of host CREBBP which is a key component of the IFN enhanceosome is likely responsible for the inhibition of interferon mediated by Nsp1-alpha. Also participates in the inhibition of host NF-kappa-B activation by counteracting LUBAC-dependent induction of NF-kappa-B. Reduces host NEMO ubiquitination by blocking the interaction between the two LUBAC complex components RNF31 and SHARPIN. Functionally, plays a role in blocking host mRNA nuclear export to the cytoplasm and subversion of host protein synthesis. Additionally, inhibits the interferon-activated JAK/STAT signal transduction by mediating the ubiquitination and subsequent proteasomal degradation of host KPNA1. Repurposes the host antiviral stress granules into a proviral platform to counteract the EIF2AK2/PKR restriction, thereby regulating the host inflammatory response. Multifunctional protein that acts as a viral protease and as a viral antagonist of host immune response. Cleaves the nsp2/nsp3 site in the viral polyprotein. Displays deubiquitinating activity that cleaves both ubiquitinated and ISGylated products and therefore inhibits ubiquitin and ISG15-dependent host innate immunity. Also deubiquinates host NFKBIA, thereby interfering with NFKBIA degradation and impairing subsequent NF-kappa-B activation. In terms of biological role, plays a role in the inhibition of the immune response by interacting with host IFITM1. This interaction leads to the proteasomal degradation of the IFN-induced antiviral protein IFITM1. Its function is as follows. Cleaves the majority of cleavage sites present in the C-terminus of the polyprotein. Triggers host apoptosis through caspase-3, -8, and -9 activations. Subverts host innate immune responses through its protease activity. Targets the NF-kappa-B essential modulator NEMO and mediates its cleavage. Blocks host interferon beta induction and downstream signaling by cleaving mitochondrial MAVS, dislodging it from the mitochondria. Impairs host defense by cleaving host mRNA-decapping enzyme DCP1A to attenuate its antiviral activity. Functionally, plays a role in the initial induction of autophagosomes from host endoplasmic reticulum. Plays a role in the inhibition of host STAT3 signaling pathway by inducing the degradation of STAT3. In terms of biological role, responsible for replication and transcription of the viral RNA genome. Its function is as follows. Displays RNA and DNA duplex-unwinding activities with 5' to 3' polarity. Functionally, plays a role in viral transcription/replication and prevents the simultaneous activation of host cell dsRNA sensors, such as MDA5/IFIH1, OAS, PKR and NLRP3 inflammasome. Acts by degrading the 5'-polyuridines generated during replication of the poly(A) region of viral genomic and subgenomic RNAs. Catalyzes a two-step reaction in which a 2'3'-cyclic phosphate (2'3'-cP) is first generated by 2'-O transesterification, which is then hydrolyzed to a 3'-phosphate (3'-P). If not degraded, poly(U) RNA would hybridize with poly(A) RNA tails and activate host dsRNA sensors. Also plays a role in the inhibition of host type I interferon production by recruiting host OTULIN to promote removal of linear ubiquitination targeting host NEMO. This Sus scrofa (Pig) protein is Replicase polyprotein 1ab (rep).